The primary structure comprises 282 residues: ATP phosphoribosyltransferase (282 aa).

The protein belongs to the ATP phosphoribosyltransferase family. Long subfamily. The cofactor is Mg(2+).

It localises to the cytoplasm. It carries out the reaction 1-(5-phospho-beta-D-ribosyl)-ATP + diphosphate = 5-phospho-alpha-D-ribose 1-diphosphate + ATP. Its pathway is amino-acid biosynthesis; L-histidine biosynthesis; L-histidine from 5-phospho-alpha-D-ribose 1-diphosphate: step 1/9. Its activity is regulated as follows. Feedback inhibited by histidine. Functionally, catalyzes the condensation of ATP and 5-phosphoribose 1-diphosphate to form N'-(5'-phosphoribosyl)-ATP (PR-ATP). Has a crucial role in the pathway because the rate of histidine biosynthesis seems to be controlled primarily by regulation of HisG enzymatic activity. The protein is ATP phosphoribosyltransferase of Micrococcus luteus (strain ATCC 4698 / DSM 20030 / JCM 1464 / CCM 169 / CCUG 5858 / IAM 1056 / NBRC 3333 / NCIMB 9278 / NCTC 2665 / VKM Ac-2230) (Micrococcus lysodeikticus).